Consider the following 226-residue polypeptide: Endonuclease NucS (226 aa).

It belongs to the NucS endonuclease family.

It localises to the cytoplasm. Functionally, cleaves both 3' and 5' ssDNA extremities of branched DNA structures. In Mycobacterium tuberculosis (strain CDC 1551 / Oshkosh), this protein is Endonuclease NucS.